Here is a 356-residue protein sequence, read N- to C-terminus: NADH dehydrogenase (ubiquinone) complex I, assembly factor 6 homolog (356 aa).

A mitochondrion-targeting transit peptide spans Met1–Thr41.

Belongs to the NDUFAF6 family.

Its subcellular location is the mitochondrion inner membrane. Its function is as follows. Involved in the assembly of mitochondrial NADH:ubiquinone oxidoreductase complex (complex I) at early stages. The polypeptide is NADH dehydrogenase (ubiquinone) complex I, assembly factor 6 homolog (Dictyostelium discoideum (Social amoeba)).